Reading from the N-terminus, the 1142-residue chain is E3 ubiquitin-protein ligase TRIM33 (1142 aa).

Gly residues predominate over residues Met1–Gly18. A disordered region spans residues Met1–Gly132. Residues Met1–His163 are necessary for E3 ubiquitin-protein ligase activity and repression of SMAD4 signaling and transcriptional repression. The segment covering Ser19–Leu42 has biased composition (low complexity). Residues Arg52–Asp64 are compositionally biased toward gly residues. Residues Gly65–Pro99 show a composition bias toward low complexity. Residues Ala100 to Ala122 are compositionally biased toward pro residues. Residues Cys141–Arg201 form an RING-type zinc finger. B box-type zinc fingers lie at residues Lys228 to Lys275 and Gln287 to Leu328. Cys233, Cys236, Cys257, His261, Cys292, His295, Cys315, and His320 together coordinate Zn(2+). A necessary for oligomerization region spans residues Cys315–Asp417. A coiled-coil region spans residues Cys315 to Asp417. Glycyl lysine isopeptide (Lys-Gly) (interchain with G-Cter in SUMO2) cross-links involve residues Lys345, Lys350, Lys497, and Lys520. Residue Arg531 is modified to Asymmetric dimethylarginine; alternate. Arg531 is subject to Omega-N-methylarginine; alternate. Lys543 participates in a covalent cross-link: Glycyl lysine isopeptide (Lys-Gly) (interchain with G-Cter in SUMO2). Omega-N-methylarginine is present on Arg551. The residue at position 593 (Arg593) is an Asymmetric dimethylarginine. Arg607 is subject to Asymmetric dimethylarginine; alternate. The residue at position 607 (Arg607) is an Omega-N-methylarginine; alternate. 2 positions are modified to asymmetric dimethylarginine: Arg614 and Arg620. 3 disordered regions span residues Pro657–Ser676, Asn688–Gly707, and Tyr718–Ser834. Positions Pro738 to Arg774 are enriched in low complexity. Basic and acidic residues-rich tracts occupy residues Thr775–Pro794 and Lys808–Arg817. Residues Lys778 and Lys784 each carry the N6-acetyllysine; alternate modification. Glycyl lysine isopeptide (Lys-Gly) (interchain with G-Cter in SUMO2); alternate cross-links involve residues Lys778 and Lys784. A Glycyl lysine isopeptide (Lys-Gly) (interchain with G-Cter in SUMO2) cross-link involves residue Lys789. Residues Lys791 and Lys808 each participate in a glycyl lysine isopeptide (Lys-Gly) (interchain with G-Cter in SUMO2); alternate cross-link. Glycyl lysine isopeptide (Lys-Gly) (interchain with G-Cter in SUMO1); alternate cross-links involve residues Lys791 and Lys808. At Lys808 the chain carries N6-acetyllysine; alternate. Lys811 participates in a covalent cross-link: Glycyl lysine isopeptide (Lys-Gly) (interchain with G-Cter in SUMO2). Ser818 carries the post-translational modification Phosphoserine. The span at Leu822 to Ser834 shows a compositional bias: low complexity. Residue Thr830 is modified to Phosphothreonine. Residue Lys876 forms a Glycyl lysine isopeptide (Lys-Gly) (interchain with G-Cter in SUMO2) linkage. A Phosphoserine modification is found at Ser877. A PHD-type zinc finger spans residues Glu902–Ile949. Lys966 carries the post-translational modification N6-acetyllysine. Lys968 carries the post-translational modification N6-acetyllysine; alternate. A Glycyl lysine isopeptide (Lys-Gly) (interchain with G-Cter in SUMO2); alternate cross-link involves residue Lys968. The region spanning Gly972–Ile1095 is the Bromo domain. Residues Lys1022 and Lys1058 each participate in a glycyl lysine isopeptide (Lys-Gly) (interchain with G-Cter in SUMO2) cross-link. Thr1066 carries the phosphothreonine modification. A Glycyl lysine isopeptide (Lys-Gly) (interchain with G-Cter in SUMO2) cross-link involves residue Lys1072. A disordered region spans residues Pro1103 to Lys1142. Positions Phe1107–Phe1124 are enriched in acidic residues. The residue at position 1117 (Thr1117) is a Phosphothreonine. Ser1120 bears the Phosphoserine mark. Lys1133 is covalently cross-linked (Glycyl lysine isopeptide (Lys-Gly) (interchain with G-Cter in SUMO2)). A compositionally biased stretch (basic and acidic residues) spans Lys1133 to Lys1142. At Ser1134 the chain carries Phosphoserine.

Belongs to the TRIM/RBCC family. Homooligomer and heterooligomer with TRIM24 and TRIM28 family members. Interacts with SMAD4 in unstimulated cells. Found in a complex with SMAD2 and SMAD3 upon addition of TGF-beta. Interacts with SMAD2 and SMAD3. Interacts with SMAD4 under basal and induced conditions and, upon TGF-beta signaling, with activated SMAD2. Forms a ternary complex with SMAD4 and SMAD2 upon TGF-beta signaling. Post-translationally, sumoylated with SUMO1. In terms of tissue distribution, ubiquitous with high level in testis.

It localises to the nucleus. It carries out the reaction S-ubiquitinyl-[E2 ubiquitin-conjugating enzyme]-L-cysteine + [acceptor protein]-L-lysine = [E2 ubiquitin-conjugating enzyme]-L-cysteine + N(6)-ubiquitinyl-[acceptor protein]-L-lysine.. The protein operates within protein modification; protein ubiquitination. Its function is as follows. Acts as an E3 ubiquitin-protein ligase. Promotes SMAD4 ubiquitination, nuclear exclusion and degradation via the ubiquitin proteasome pathway. May act as a transcriptional repressor. Inhibits the transcriptional response to TGF-beta/BMP signaling cascade. Plays a role in the control of cell proliferation. Its association with SMAD2 and SMAD3 stimulates erythroid differentiation of hematopoietic stem/progenitor. Monoubiquitinates SMAD4 and acts as an inhibitor of SMAD4-dependent TGF-beta/BMP signaling cascade (Monoubiquitination of SMAD4 hampers its ability to form a stable complex with activated SMAD2/3 resulting in inhibition of TGF-beta/BMP signaling cascade). The chain is E3 ubiquitin-protein ligase TRIM33 (Trim33) from Mus musculus (Mouse).